Here is a 435-residue protein sequence, read N- to C-terminus: Eukaryotic translation initiation factor 3 subunit E (435 aa).

The PCI domain maps to 219–392; it reads FFNHAKGRDL…GHVVMGTQPL (174 aa).

This sequence belongs to the eIF-3 subunit E family. As to quaternary structure, component of the eukaryotic translation initiation factor 3 (eIF-3) complex.

It localises to the cytoplasm. Component of the eukaryotic translation initiation factor 3 (eIF-3) complex, which is involved in protein synthesis of a specialized repertoire of mRNAs and, together with other initiation factors, stimulates binding of mRNA and methionyl-tRNAi to the 40S ribosome. The eIF-3 complex specifically targets and initiates translation of a subset of mRNAs involved in cell proliferation. The polypeptide is Eukaryotic translation initiation factor 3 subunit E (eIF3-S6) (Aedes aegypti (Yellowfever mosquito)).